Reading from the N-terminus, the 927-residue chain is Echinoderm microtubule-associated protein-like 4 (927 aa).

The microtubule-binding stretch occupies residues 1-189 (MDGFAGSLDD…IPSDVENYDD (189 aa)). The stretch at 14 to 63 (AASTSDVQDRLSALELRVQQQEDEITVLKAALADVLRRLAISEDQVATVR) forms a coiled coil. Positions 85–132 (NGGAGTRKPSHASSVAKKDTLSSAAKSVKRSSTLEKSHNSWDASEESR) are disordered. The segment covering 116 to 132 (STLEKSHNSWDASEESR) has biased composition (basic and acidic residues). WD repeat units lie at residues 199–237 (LKLE…LFNY), 241–288 (TQRH…VWDS), 296–336 (VIGL…VWDW), 343–378 (AEIK…FWTW), 385–424 (RKQG…IWSK), 442–480 (QISK…MWDH), 485–521 (EREI…LRGT), 524–563 (DGFQ…LWNS), 567–604 (SLEW…VLDA), 610–646 (VSIH…LYNV), 653–692 (YSRY…YWDI), 702–760 (RSEC…LFQY), and 767–806 (APSH…QWRL). Over residues 815 to 829 (NDNIAESSSAVNSPV) the composition is skewed to polar residues. Positions 815-927 (NDNIAESSSA…NQDDDDAPLS (113 aa)) are disordered. Acidic residues predominate over residues 914–927 (AQDENQDDDDAPLS).

The protein belongs to the WD repeat EMAP family. Homotrimer; self-association is mediated by the N-terminal coiled coil.

The protein resides in the cytoplasm. It localises to the cytoskeleton. Its subcellular location is the spindle. It is found in the microtubule organizing center. The protein localises to the midbody. In terms of biological role, essential for the formation and stability of microtubules (MTs). Required for the organization of the mitotic spindle and for the proper attachment of kinetochores to MTs. Promotes the recruitment of NUDC to the mitotic spindle for mitotic progression. The chain is Echinoderm microtubule-associated protein-like 4 (eml4) from Xenopus laevis (African clawed frog).